The primary structure comprises 497 residues: Early growth response protein 1-A (497 aa).

The segment covering 139 to 165 (SPSSAPSSSPSSSSSSSSSQSPPLSCS) has biased composition (low complexity). 3 disordered regions span residues 139–169 (SPSS…VQSN), 175–194 (YSAA…DHSP), and 286–309 (PSRM…YGCP). C2H2-type zinc fingers lie at residues 306 to 330 (YGCP…IRIH), 336 to 358 (FQCR…IRTH), and 364 to 386 (FACD…TKIH). Residues 377–441 (DERKRHTKIH…SYPSPVHSSF (65 aa)) are disordered. The segment covering 381–391 (RHTKIHLRQKD) has biased composition (basic residues). The span at 397 to 441 (ATPVSVASPVSSYSPSASTSYPSPVPTSYSSPVSSSYPSPVHSSF) shows a compositional bias: low complexity.

This sequence belongs to the EGR C2H2-type zinc-finger protein family. As to expression, expressed in the presumptive mesoderm. In blastula embryos, expressed in the dorsal marginal zone, and at the onset of gastrulation expression is specific to the Spemann organizer. As gastrulation proceeds, expressed in a ring around the yolk plug. This expression is maintained in advanced gastrulae, with weak expression also extending into the dorsal midline. By the neurula stage, expression is excluded from the notochord. In late tailbud stages, expressed in two spots in the anterior forebrain, which are connected via a bridge of cells that also show expression.

The protein localises to the nucleus. It is found in the cytoplasm. Functionally, transcriptional regulator. Recognizes and binds to the DNA sequence 5'-GCG(T/G)GGGCG-3'(EGR-site) in the promoter region of target genes. Binds double-stranded target DNA, irrespective of the cytosine methylation status. Regulates the transcription of numerous target genes, and thereby plays an important role in regulating the response to growth factors, DNA damage, and ischemia. Plays a role in the regulation of cell survival, proliferation and cell death. Mediates responses to ischemia and hypoxia; regulates the expression of proteins that are involved in inflammatory processes. Plays a role in regulating the expression of circadian clock genes. The polypeptide is Early growth response protein 1-A (egr1-a) (Xenopus laevis (African clawed frog)).